Reading from the N-terminus, the 498-residue chain is ATP synthase subunit beta, chloroplastic (498 aa).

172–179 (GGAGVGKT) is a binding site for ATP.

The protein belongs to the ATPase alpha/beta chains family. In terms of assembly, F-type ATPases have 2 components, CF(1) - the catalytic core - and CF(0) - the membrane proton channel. CF(1) has five subunits: alpha(3), beta(3), gamma(1), delta(1), epsilon(1). CF(0) has four main subunits: a(1), b(1), b'(1) and c(9-12).

It is found in the plastid. Its subcellular location is the chloroplast thylakoid membrane. The catalysed reaction is ATP + H2O + 4 H(+)(in) = ADP + phosphate + 5 H(+)(out). Produces ATP from ADP in the presence of a proton gradient across the membrane. The catalytic sites are hosted primarily by the beta subunits. The protein is ATP synthase subunit beta, chloroplastic of Nicotiana tomentosiformis (Tobacco).